A 296-amino-acid polypeptide reads, in one-letter code: 4-diphosphocytidyl-2-C-methyl-D-erythritol kinase (296 aa).

K14 is a catalytic residue. Residue 97–107 (PMGAGMGGGSS) participates in ATP binding. The active site involves D139.

This sequence belongs to the GHMP kinase family. IspE subfamily.

The enzyme catalyses 4-CDP-2-C-methyl-D-erythritol + ATP = 4-CDP-2-C-methyl-D-erythritol 2-phosphate + ADP + H(+). It participates in isoprenoid biosynthesis; isopentenyl diphosphate biosynthesis via DXP pathway; isopentenyl diphosphate from 1-deoxy-D-xylulose 5-phosphate: step 3/6. Catalyzes the phosphorylation of the position 2 hydroxy group of 4-diphosphocytidyl-2C-methyl-D-erythritol. The protein is 4-diphosphocytidyl-2-C-methyl-D-erythritol kinase of Polynucleobacter necessarius subsp. necessarius (strain STIR1).